The chain runs to 100 residues: Urease subunit gamma (100 aa).

This sequence belongs to the urease gamma subunit family. In terms of assembly, heterotrimer of UreA (gamma), UreB (beta) and UreC (alpha) subunits. Three heterotrimers associate to form the active enzyme.

The protein localises to the cytoplasm. It catalyses the reaction urea + 2 H2O + H(+) = hydrogencarbonate + 2 NH4(+). The protein operates within nitrogen metabolism; urea degradation; CO(2) and NH(3) from urea (urease route): step 1/1. The protein is Urease subunit gamma of Prochlorococcus marinus (strain MIT 9301).